Reading from the N-terminus, the 476-residue chain is Rho GTPase-activating protein 68F (476 aa).

Disordered stretches follow at residues 1–35 and 241–266; these read MDAH…DLHD and DKLN…QQQH. Ser-29 and Ser-31 each carry phosphoserine. Residues 91–244 form the CRAL-TRIO domain; that stretch reads SENFQTPRNK…NICDLDDKLN (154 aa). Residue Thr-251 is modified to Phosphothreonine. Polar residues predominate over residues 257 to 266; that stretch reads NINASRQQQH. The Rho-GAP domain maps to 276–464; the sequence is VPLKFIVMNS…FVLQNHKDIY (189 aa).

Its function is as follows. Functions as a GTPase-activating protein (GAP) for RhoA/Rho1 during gastrulation by converting it to an inactive GDP-bound state. The protein is Rho GTPase-activating protein 68F (RhoGAP68F) of Drosophila melanogaster (Fruit fly).